The primary structure comprises 234 residues: Glucosamine-6-phosphate deaminase (234 aa).

Aspartate 62 functions as the Proton acceptor; for enolization step in the catalytic mechanism. Asparagine 128 functions as the For ring-opening step in the catalytic mechanism. Histidine 130 acts as the Proton acceptor; for ring-opening step in catalysis. The active-site For ring-opening step is glutamate 135.

It belongs to the glucosamine/galactosamine-6-phosphate isomerase family. NagB subfamily.

It catalyses the reaction alpha-D-glucosamine 6-phosphate + H2O = beta-D-fructose 6-phosphate + NH4(+). It participates in amino-sugar metabolism; N-acetylneuraminate degradation; D-fructose 6-phosphate from N-acetylneuraminate: step 5/5. Functionally, catalyzes the reversible isomerization-deamination of glucosamine 6-phosphate (GlcN6P) to form fructose 6-phosphate (Fru6P) and ammonium ion. The polypeptide is Glucosamine-6-phosphate deaminase (Streptococcus equi subsp. equi (strain 4047)).